A 213-amino-acid chain; its full sequence is Orotate phosphoribosyltransferase (213 aa).

K26 lines the 5-phospho-alpha-D-ribose 1-diphosphate pocket. 34–35 is an orotate binding site; the sequence is FF. 5-phospho-alpha-D-ribose 1-diphosphate contacts are provided by residues 72-73, R99, K100, K103, H105, and 124-132; these read YK and DDVITAGTA. Orotate contacts are provided by T128 and R156.

It belongs to the purine/pyrimidine phosphoribosyltransferase family. PyrE subfamily. Homodimer. Mg(2+) is required as a cofactor.

It carries out the reaction orotidine 5'-phosphate + diphosphate = orotate + 5-phospho-alpha-D-ribose 1-diphosphate. It participates in pyrimidine metabolism; UMP biosynthesis via de novo pathway; UMP from orotate: step 1/2. Catalyzes the transfer of a ribosyl phosphate group from 5-phosphoribose 1-diphosphate to orotate, leading to the formation of orotidine monophosphate (OMP). The polypeptide is Orotate phosphoribosyltransferase (Escherichia coli O127:H6 (strain E2348/69 / EPEC)).